An 806-amino-acid polypeptide reads, in one-letter code: Leucine--tRNA ligase (806 aa).

Residues Ser54 to His64 carry the 'HIGH' region motif. Residues Lys571 to Ser575 carry the 'KMSKS' region motif. Residue Lys574 participates in ATP binding.

This sequence belongs to the class-I aminoacyl-tRNA synthetase family.

It localises to the cytoplasm. It catalyses the reaction tRNA(Leu) + L-leucine + ATP = L-leucyl-tRNA(Leu) + AMP + diphosphate. The protein is Leucine--tRNA ligase of Tropheryma whipplei (strain TW08/27) (Whipple's bacillus).